The primary structure comprises 462 residues: Chitinase 1 (462 aa).

The first 17 residues, 1 to 17, serve as a signal peptide directing secretion; the sequence is MILNLIILLAISIVASA. A GH18 domain is found at 18 to 291; that stretch reads SNIAAYWGQN…NQLHQALSGS (274 aa). N-linked (GlcNAc...) asparagine glycosylation occurs at asparagine 57. Residue glutamate 147 is the Proton donor of the active site.

The protein belongs to the glycosyl hydrolase 18 family. Chitinase class V subfamily.

It localises to the secreted. The catalysed reaction is Random endo-hydrolysis of N-acetyl-beta-D-glucosaminide (1-&gt;4)-beta-linkages in chitin and chitodextrins.. Functionally, chitinase involved in the remodeling of chitin in the fungal cell wall. Plays a role in cell separation. In Candida albicans (strain SC5314 / ATCC MYA-2876) (Yeast), this protein is Chitinase 1 (CHT1).